A 281-amino-acid chain; its full sequence is Fructose-bisphosphate aldolase class 1 (281 aa).

K191 (schiff-base intermediate with dihydroxyacetone-P) is an active-site residue.

Belongs to the DeoC/FbaB aldolase family. Homooctamer.

Its subcellular location is the cytoplasm. The catalysed reaction is beta-D-fructose 1,6-bisphosphate = D-glyceraldehyde 3-phosphate + dihydroxyacetone phosphate. With respect to regulation, activated by citrate. This is Fructose-bisphosphate aldolase class 1 (fba) from Pyrococcus furiosus (strain ATCC 43587 / DSM 3638 / JCM 8422 / Vc1).